Reading from the N-terminus, the 59-residue chain is uncharacterized protein (59 aa).

2 consecutive transmembrane segments (helical) span residues 1-21 and 30-50; these read MNMY…YIFI and GSWI…PYFY.

The protein resides in the cell membrane. This is an uncharacterized protein from Bacillus subtilis (strain 168).